The sequence spans 106 residues: Halilectin 3, beta chain (106 aa).

Asn-65 carries an N-linked (GlcNAc...) asparagine glycan.

Probable heterotrimer consisting of an alpha chain and two beta chains. The alpha chain can probably have different glycosylation states. Post-translationally, glycosylated.

Functionally, lectin with affinity for N-acetyl-galactosamine, carragenan and glycoprotein porcine stomach mucin (PSM). Has metal-independent hemagglutinating activity towards erythrocytes from rabbit and human. Hemagglutinating activity is not inhibited by D-galactose, D-glucose, D-mannose, D-fucose, methyl-alpha-D-galactopyranoside, methyl-alpha-D-glucopyranoside, N-acetyl-glucosamine, N-acetyl-mannosamine, D-fructose, alpha-D-lactose, beta-D-lactose, D-lactulose, D-sucrose, fucoidan or glycoproteins thyroglobulin and ovalmucoid. In Haliclona caerulea (Blue Caribbean sponge), this protein is Halilectin 3, beta chain.